A 495-amino-acid polypeptide reads, in one-letter code: Protein FAM83F (495 aa).

The residue at position 2 (A2) is an N-acetylalanine. The DUF1669 stretch occupies residues 2 to 294 (AESQLSCLDE…LYAISEEVNL (293 aa)). S4 is subject to Phosphoserine. 2 disordered regions span residues 341-362 (QQRE…GESA) and 384-495 (PISP…CVIS). Positions 447-458 (PAVPSSMASSPS) are enriched in low complexity. S477 carries the post-translational modification Phosphoserine.

This sequence belongs to the FAM83 family. Directly interacts (via DUF1669) with CSNK1A1 and CSNK1A1L.

The protein resides in the cell membrane. This is Protein FAM83F (Fam83f) from Mus musculus (Mouse).